The chain runs to 297 residues: Acetylglutamate kinase (297 aa).

Substrate-binding positions include 70-71 (GG), arginine 92, and asparagine 194.

This sequence belongs to the acetylglutamate kinase family. ArgB subfamily.

The protein resides in the cytoplasm. It carries out the reaction N-acetyl-L-glutamate + ATP = N-acetyl-L-glutamyl 5-phosphate + ADP. Its pathway is amino-acid biosynthesis; L-arginine biosynthesis; N(2)-acetyl-L-ornithine from L-glutamate: step 2/4. In terms of biological role, catalyzes the ATP-dependent phosphorylation of N-acetyl-L-glutamate. This Janthinobacterium sp. (strain Marseille) (Minibacterium massiliensis) protein is Acetylglutamate kinase.